The primary structure comprises 101 residues: Phosphoribosyl-AMP cyclohydrolase (101 aa).

Asp-71 contacts Mg(2+). Cys-72 contacts Zn(2+). Mg(2+) contacts are provided by Asp-73 and Asp-75. The Zn(2+) site is built by Cys-88 and Cys-95.

Belongs to the PRA-CH family. As to quaternary structure, homodimer. The cofactor is Mg(2+). It depends on Zn(2+) as a cofactor.

It localises to the cytoplasm. The catalysed reaction is 1-(5-phospho-beta-D-ribosyl)-5'-AMP + H2O = 1-(5-phospho-beta-D-ribosyl)-5-[(5-phospho-beta-D-ribosylamino)methylideneamino]imidazole-4-carboxamide. It participates in amino-acid biosynthesis; L-histidine biosynthesis; L-histidine from 5-phospho-alpha-D-ribose 1-diphosphate: step 3/9. In terms of biological role, catalyzes the hydrolysis of the adenine ring of phosphoribosyl-AMP. This is Phosphoribosyl-AMP cyclohydrolase from Bacillus cereus (strain 03BB102).